A 273-amino-acid chain; its full sequence is Pantothenate synthetase (273 aa).

27–34 (MGALHQGH) is a binding site for ATP. His34 functions as the Proton donor in the catalytic mechanism. Gln58 contacts (R)-pantoate. Position 58 (Gln58) interacts with beta-alanine. An ATP-binding site is contributed by 144–147 (GKKD). A (R)-pantoate-binding site is contributed by Gln150. ATP-binding positions include Val173 and 181-184 (LSSR).

It belongs to the pantothenate synthetase family. Homodimer.

It localises to the cytoplasm. The catalysed reaction is (R)-pantoate + beta-alanine + ATP = (R)-pantothenate + AMP + diphosphate + H(+). The protein operates within cofactor biosynthesis; (R)-pantothenate biosynthesis; (R)-pantothenate from (R)-pantoate and beta-alanine: step 1/1. Catalyzes the condensation of pantoate with beta-alanine in an ATP-dependent reaction via a pantoyl-adenylate intermediate. The sequence is that of Pantothenate synthetase from Nitratiruptor sp. (strain SB155-2).